Consider the following 373-residue polypeptide: Partitioning protein REP1 (373 aa).

The interaction with REP2 stretch occupies residues 1–76; the sequence is MNGERLLACI…EKELDWPDPA (76 aa). The interaction with REP2 and self-association stretch occupies residues 1-129; that stretch reads MNGERLLACI…LNRRGKGIRR (129 aa). Residues 349 to 373 are nuclear localization; sequence FEEHWKPVDVEVEFRCKFKERKVDG.

As to quaternary structure, interacts with REP2.

The protein resides in the nucleus. In terms of biological role, part of the plasmid partitioning system, which ensures the equal distribution of replicated plasmid molecules to daughter cells. The plasmids exist as well-organized plasmid foci within the nucleus that stay together throughout the cell-cycle and act as entity during segregation, effetively reducing copy number to one. Plasmid partitioning requires the proteins REP1, REP2, and a cis-acting locus STB (REP3). REP1-REP2 stably associate with CSE4-containing chromatin at STB during S-phase, marking the locus with a centromeric tag, and thereby probably catching mitotic spindle microtubules to the plasmid cluster and coupling plasmid segregation to chromosome segregation. REP1-REP2 are required to recruit the cohesin complex to the STB locus for pairing of the replicated plasmid cluster, a prerequisite for successful plasmid segregation. REP1-REP2 also negatively regulate expression of site-specific recombinase FLP and of RAF1. This chain is Partitioning protein REP1 (REP1), found in Saccharomyces cerevisiae (strain ATCC 204508 / S288c) (Baker's yeast).